A 1020-amino-acid polypeptide reads, in one-letter code: MPSQRKSPDQKRPRRSLSTSKTAKSQCHSITSYFNSAPPAKLACSTCHKMVPRYDLIRHLDESCANNGVGDDVQVEPAQAGLMSPTVPTSDLPSGPLENVTPQKLSPPKRSLISVQCGSKLGIQQQTSPYFKDALVSKDQNELPNQSVEIMPLGSLTSKLSRRYLNAKKSLAKNEGLASQCPQTSPSTPGTSLTDNCPEMEDKDEVLNSSQKENIYSCAPLKEENASEQKVKNNKITGDESQKASCGEPALTPASAEHASILLSSDSTLVSNTKSSPGDTLVKQESARRADVGLAEPLEVRSHKEVQMTFDAAAKTLVSGEAESNGPTDVDMSDMTTWSNNQELVREAGSVLHCPLEQGSSCGGPSETAQLALSHPYYLRSFLVVLQALLGNEEDMKLFDEQEKAIITRFYQLSASGQKLYVRLFQRKLTWIKMSKLEYEEIASDLTPVVEELKDSGFLQTESELQELSDVLELLSAPELKALAKTFHLVSPGGQKQQLVDAFHKLAKQRSVCTWGKTQPGIRAVILKRAKDLAGRSLRVCKGPRAVFARILLLFSLTDSMEDEEAACGGQGQLSTVLLVNLGRMEFPQYTICRKTQIFRDREDLIRYAAAAHMLSDISAAMASGNWEDAKELARSAKRDWEQLKSHPSLRYHEALPPFLRCFTVGWIYTRISSRAVEVLERLHMYEEAVKELENLLSQKIYCPDSRGRWWDRLALNLHQHLKRLEEAIRCIREGLADPHVRTGHRLSLYQRAVRLRESPSCRKYKHLFSRLPEVAVGDVKHVTITGRLCPQHGMGKSVFVMESGDGANPTTVLCSVEELALGYYRQSGFDQGIHGEGSTFSTLCGLLLWDIIFMDGIPDVFRNAYQASPLDLLTDSFFASREQALEARLQLIHSAPAESLRAWVGEAWQAQQGRVASLVSWDRFTSLQQAQDLVSCLGGPVLSGVCRRLAADFRHCRGGLPDLVVWNSQSHHCKLVEVKGPSDRLSCKQMIWLYELQKLGADVEVCHVVAVGAKSKGLG.

Residues 1–11 (MPSQRKSPDQK) show a composition bias toward basic and acidic residues. The tract at residues 1 to 24 (MPSQRKSPDQKRPRRSLSTSKTAK) is disordered. The short motif at 14 to 22 (RRSLSTSKT) is the D-box element. Residues 41-69 (KLACSTCHKMVPRYDLIRHLDESCANNGV) form a UBZ4-type zinc finger. Positions 44, 47, 59, and 64 each coordinate Zn(2+). Residues 173 to 208 (KNEGLASQCPQTSPSTPGTSLTDNCPEMEDKDEVLN) are disordered. Residues 180 to 195 (QCPQTSPSTPGTSLTD) show a composition bias toward polar residues. Positions 212 to 214 (KEN) match the KEN box motif. Residues 224–242 (ENASEQKVKNNKITGDESQ) are compositionally biased toward basic and acidic residues. Disordered regions lie at residues 224-252 (ENAS…PALT) and 269-288 (LVSN…ESAR). Residues 269–278 (LVSNTKSSPG) are compositionally biased toward polar residues. A coiled-coil region spans residues 673 to 737 (SSRAVEVLER…AIRCIREGLA (65 aa)). Mn(2+) is bound by residues Glu-837, Asp-963, Glu-978, and Val-979. The VRR-NUC domain occupies 898-1010 (AESLRAWVGE…GADVEVCHVV (113 aa)).

The protein belongs to the FAN1 family. Interacts with FANCD2 (when monoubiquitinated). Interacts with FANCI, MLH1, MLH3 and PMS2. Mn(2+) serves as cofactor. The cofactor is Mg(2+). In terms of processing, ubiquitinated and degraded during mitotic exit by the APC/C-Cdh1 complex.

The protein resides in the nucleus. It catalyses the reaction Hydrolytically removes 5'-nucleotides successively from the 3'-hydroxy termini of 3'-hydroxy-terminated oligonucleotides.. Nuclease required for the repair of DNA interstrand cross-links (ICL) recruited at sites of DNA damage by monoubiquitinated FANCD2. Specifically involved in repair of ICL-induced DNA breaks by being required for efficient homologous recombination, probably in the resolution of homologous recombination intermediates. Not involved in DNA double-strand breaks resection. Acts as a 5'-3' exonuclease that anchors at a cut end of DNA and cleaves DNA successively at every third nucleotide, allowing to excise an ICL from one strand through flanking incisions. Probably keeps excising with 3'-flap annealing until it reaches and unhooks the ICL. Acts at sites that have a 5'-terminal phosphate anchor at a nick or a 1- or 2-nucleotide flap and is augmented by a 3' flap. Also has endonuclease activity toward 5'-flaps. The protein is Fanconi-associated nuclease 1 of Mus musculus (Mouse).